Here is a 431-residue protein sequence, read N- to C-terminus: Glutamate--tRNA ligase 1 (431 aa).

A 'HIGH' region motif is present at residues 6–16; it reads PSPTGDMHIGN. Positions 235–239 match the 'KMSKS' region motif; the sequence is KMSKR. Lysine 238 provides a ligand contact to ATP.

This sequence belongs to the class-I aminoacyl-tRNA synthetase family. Glutamate--tRNA ligase type 1 subfamily. In terms of assembly, monomer.

Its subcellular location is the cytoplasm. It catalyses the reaction tRNA(Glu) + L-glutamate + ATP = L-glutamyl-tRNA(Glu) + AMP + diphosphate. Its function is as follows. Catalyzes the attachment of glutamate to tRNA(Glu) in a two-step reaction: glutamate is first activated by ATP to form Glu-AMP and then transferred to the acceptor end of tRNA(Glu). The protein is Glutamate--tRNA ligase 1 of Campylobacter jejuni (strain RM1221).